Consider the following 469-residue polypeptide: Diaminobutyrate--2-oxoglutarate transaminase (469 aa).

Residue lysine 290 is modified to N6-(pyridoxal phosphate)lysine.

The protein belongs to the class-III pyridoxal-phosphate-dependent aminotransferase family. It depends on pyridoxal 5'-phosphate as a cofactor.

It is found in the cytoplasm. It catalyses the reaction L-2,4-diaminobutanoate + 2-oxoglutarate = L-aspartate 4-semialdehyde + L-glutamate. Its function is as follows. Involved in the degradation of ectoine, which allows H.elongata to utilize ectoine as both a carbon and a nitrogen source for growth. Probably catalyzes the conversion of L-2,4-diaminobutyrate (DABA) to L-aspartate beta-semialdehyde (ASA) by transamination with 2-oxoglutarate. This is Diaminobutyrate--2-oxoglutarate transaminase from Halomonas elongata (strain ATCC 33173 / DSM 2581 / NBRC 15536 / NCIMB 2198 / 1H9).